The chain runs to 435 residues: Methylenetetrahydrofolate--tRNA-(uracil-5-)-methyltransferase TrmFO (435 aa).

Residue 7 to 12 coordinates FAD; that stretch reads GAGLAG.

This sequence belongs to the MnmG family. TrmFO subfamily. FAD is required as a cofactor.

The protein resides in the cytoplasm. The enzyme catalyses uridine(54) in tRNA + (6R)-5,10-methylene-5,6,7,8-tetrahydrofolate + NADH + H(+) = 5-methyluridine(54) in tRNA + (6S)-5,6,7,8-tetrahydrofolate + NAD(+). It carries out the reaction uridine(54) in tRNA + (6R)-5,10-methylene-5,6,7,8-tetrahydrofolate + NADPH + H(+) = 5-methyluridine(54) in tRNA + (6S)-5,6,7,8-tetrahydrofolate + NADP(+). Catalyzes the folate-dependent formation of 5-methyl-uridine at position 54 (M-5-U54) in all tRNAs. This Thermotoga petrophila (strain ATCC BAA-488 / DSM 13995 / JCM 10881 / RKU-1) protein is Methylenetetrahydrofolate--tRNA-(uracil-5-)-methyltransferase TrmFO.